The chain runs to 166 residues: Cofilin-1 (166 aa).

Ala2 is modified (N-acetylalanine). Ser3 and Ser8 each carry phosphoserine. Positions 4-153 (GVAVSDGVIK…KDRCTLAEKL (150 aa)) constitute an ADF-H domain. An N6-acetyllysine modification is found at Lys13. Thr25 is subject to Phosphothreonine. Positions 30-34 (KKRKK) match the Nuclear localization signal motif. Position 41 is a phosphoserine (Ser41). Thr63 bears the Phosphothreonine mark. Tyr68 is modified (phosphotyrosine). Lys73 carries the post-translational modification N6-acetyllysine. Tyr82 is subject to Phosphotyrosine. Residue Lys132 forms a Glycyl lysine isopeptide (Lys-Gly) (interchain with G-Cter in SUMO2) linkage. At Tyr140 the chain carries Phosphotyrosine. N6-acetyllysine is present on Lys144. Phosphoserine is present on Ser156.

Belongs to the actin-binding proteins ADF family. Can bind G- and F-actin in a 1:1 ratio of cofilin to actin. It is a major component of intranuclear and cytoplasmic actin rods. Interacts with the subcortical maternal complex (SCMC) via interaction with TLE6 and NLRP5. Interacts with C9orf72. Post-translationally, inactivated by phosphorylation on Ser-3. Phosphorylated on Ser-3 in resting cells. Dephosphorylated by PDXP/chronophin; this restores its activity in promoting actin filament depolymerization. The phosphorylation of Ser-24 may prevent recognition of the nuclear localization signal. Phosphorylated via a ARRB1-RAC1-LIMK1-PAK1 cascade upon active ligand stimulation of atypical chemokine receptor ACKR2. As to expression, widely distributed in various tissues. Not found in skeletal muscle.

It is found in the nucleus matrix. The protein resides in the cytoplasm. The protein localises to the cytoskeleton. It localises to the cell projection. Its subcellular location is the ruffle membrane. It is found in the lamellipodium membrane. The protein resides in the lamellipodium. The protein localises to the growth cone. It localises to the axon. Functionally, binds to F-actin and exhibits pH-sensitive F-actin depolymerizing activity. In conjunction with the subcortical maternal complex (SCMC), plays an essential role for zygotes to progress beyond the first embryonic cell divisions via regulation of actin dynamics. Required for the centralization of the mitotic spindle and symmetric division of zygotes. Plays a role in the regulation of cell morphology and cytoskeletal organization in epithelial cells. Required for the up-regulation of atypical chemokine receptor ACKR2 from endosomal compartment to cell membrane, increasing its efficiency in chemokine uptake and degradation. Required for neural tube morphogenesis and neural crest cell migration. This Mus musculus (Mouse) protein is Cofilin-1 (Cfl1).